Consider the following 274-residue polypeptide: UPF0758 protein RHECIAT_CH0001935 (274 aa).

The disordered stretch occupies residues 1–57 (MAKRPAATSSNDELPFATEEPVADERSFFGGRPQNPTAPNARAALPASLSGPEHYHG). The region spanning 152–274 (VLSSWSSVIQ…HVSLKGLKLI (123 aa)) is the MPN domain. The Zn(2+) site is built by H223, H225, and D236. The short motif at 223–236 (HNHPSGDPTPSRAD) is the JAMM motif element.

The protein belongs to the UPF0758 family.

The sequence is that of UPF0758 protein RHECIAT_CH0001935 from Rhizobium etli (strain CIAT 652).